Here is a 429-residue protein sequence, read N- to C-terminus: Bifunctional protein GlmU (429 aa).

The segment at 1–223 (MKTSILILAA…EDEFMGINDK (223 aa)) is pyrophosphorylase. Residues 8 to 11 (LAAG), K22, and 81 to 82 (GT) contribute to the UDP-N-acetyl-alpha-D-glucosamine site. D102 is a Mg(2+) binding site. 4 residues coordinate UDP-N-acetyl-alpha-D-glucosamine: G135, E149, N164, and N221. N221 contributes to the Mg(2+) binding site. The linker stretch occupies residues 224–244 (FELSIAENFMQKKIKKYWMQQ). The segment at 245–429 (GVIFHLPQST…KDYYYKKFQK (185 aa)) is N-acetyltransferase. Residues R308 and K325 each contribute to the UDP-N-acetyl-alpha-D-glucosamine site. The Proton acceptor role is filled by H336. Y339 and N350 together coordinate UDP-N-acetyl-alpha-D-glucosamine. Residues 359–360 (NY), S378, A396, and R413 each bind acetyl-CoA.

It in the N-terminal section; belongs to the N-acetylglucosamine-1-phosphate uridyltransferase family. In the C-terminal section; belongs to the transferase hexapeptide repeat family. As to quaternary structure, homotrimer. Requires Mg(2+) as cofactor.

It localises to the cytoplasm. It catalyses the reaction alpha-D-glucosamine 1-phosphate + acetyl-CoA = N-acetyl-alpha-D-glucosamine 1-phosphate + CoA + H(+). It carries out the reaction N-acetyl-alpha-D-glucosamine 1-phosphate + UTP + H(+) = UDP-N-acetyl-alpha-D-glucosamine + diphosphate. The protein operates within nucleotide-sugar biosynthesis; UDP-N-acetyl-alpha-D-glucosamine biosynthesis; N-acetyl-alpha-D-glucosamine 1-phosphate from alpha-D-glucosamine 6-phosphate (route II): step 2/2. It participates in nucleotide-sugar biosynthesis; UDP-N-acetyl-alpha-D-glucosamine biosynthesis; UDP-N-acetyl-alpha-D-glucosamine from N-acetyl-alpha-D-glucosamine 1-phosphate: step 1/1. It functions in the pathway bacterial outer membrane biogenesis; LPS lipid A biosynthesis. Functionally, catalyzes the last two sequential reactions in the de novo biosynthetic pathway for UDP-N-acetylglucosamine (UDP-GlcNAc). The C-terminal domain catalyzes the transfer of acetyl group from acetyl coenzyme A to glucosamine-1-phosphate (GlcN-1-P) to produce N-acetylglucosamine-1-phosphate (GlcNAc-1-P), which is converted into UDP-GlcNAc by the transfer of uridine 5-monophosphate (from uridine 5-triphosphate), a reaction catalyzed by the N-terminal domain. The chain is Bifunctional protein GlmU from Campylobacter jejuni subsp. jejuni serotype O:2 (strain ATCC 700819 / NCTC 11168).